We begin with the raw amino-acid sequence, 333 residues long: Forkhead box protein unc-130 (333 aa).

The segment at 1–126 (MLFSMESILS…MSGHRKSSHA (126 aa)) is disordered. The segment covering 14-24 (PKLEPPPKLEP) has biased composition (basic and acidic residues). Positions 37–50 (RSNTRLSEPSTSAS) are enriched in polar residues. Residues 52 to 62 (LEHDLKFGESR) are compositionally biased toward basic and acidic residues. Over residues 98–110 (SSDDAKDDDDDDD) the composition is skewed to acidic residues. A DNA-binding region (fork-head) is located at residues 127-221 (KPPYSYIALI…DNGSFLRRRK (95 aa)). Positions 304–333 (APVSSGQKRTSSSSSPNENGSSAVSDKLSA) are disordered. Residues 307 to 333 (SSGQKRTSSSSSPNENGSSAVSDKLSA) are compositionally biased toward low complexity.

Expressed in ventral body wall muscle. Expressed in the structural cells and two neurons of each ray in the male tail.

It localises to the nucleus. Probable transcription factor. Binds to DNA sequence motif 5'-CTGTTTCA-3'. Required for the migration of distal tip cells (DTC) and axonal growth-cones along the dorsal-ventral axis of the body wall, acting by cell autonomous repression of unc-129/TGF-beta expression in ventral body muscle during embyogenesis. Binds to the promoter region of the unc-129 gene. Plays a role in dorsal-ventral patterning and fate specification of the postembryonic mesoderm. Involved in male tail morphogenesis and in embryogenesis. Plays a role in the development of sensory neurons and is required to repress AWA fate and promote ASG fate in the ASG chemosensory neurons. Regulates expression of a class of small RNAs, known as 21U-RNAs. This is Forkhead box protein unc-130 from Caenorhabditis elegans.